A 370-amino-acid polypeptide reads, in one-letter code: Pyruvate dehydrogenase E1 component subunit alpha (370 aa).

As to quaternary structure, heterodimer of an alpha and a beta chain. The cofactor is thiamine diphosphate.

It carries out the reaction N(6)-[(R)-lipoyl]-L-lysyl-[protein] + pyruvate + H(+) = N(6)-[(R)-S(8)-acetyldihydrolipoyl]-L-lysyl-[protein] + CO2. Functionally, the pyruvate dehydrogenase complex catalyzes the overall conversion of pyruvate to acetyl-CoA and CO(2). It contains multiple copies of three enzymatic components: pyruvate dehydrogenase (E1), dihydrolipoamide acetyltransferase (E2) and lipoamide dehydrogenase (E3). The chain is Pyruvate dehydrogenase E1 component subunit alpha (pdhA) from Staphylococcus aureus (strain MRSA252).